Reading from the N-terminus, the 158-residue chain is Transcriptional repressor NrdR (158 aa).

A zinc finger lies at 3–34; sequence CPYCGYPDSRVIDSRPTDDNTAIRRRRECLKC. One can recognise an ATP-cone domain in the interval 49-139; sequence ILVIKKDNRR…VYRQFKDINT (91 aa).

It belongs to the NrdR family. Zn(2+) serves as cofactor.

In terms of biological role, negatively regulates transcription of bacterial ribonucleotide reductase nrd genes and operons by binding to NrdR-boxes. This is Transcriptional repressor NrdR from Caldanaerobacter subterraneus subsp. tengcongensis (strain DSM 15242 / JCM 11007 / NBRC 100824 / MB4) (Thermoanaerobacter tengcongensis).